A 177-amino-acid chain; its full sequence is Peptide methionine sulfoxide reductase MsrA (177 aa).

The active site involves C15.

Belongs to the MsrA Met sulfoxide reductase family.

The enzyme catalyses L-methionyl-[protein] + [thioredoxin]-disulfide + H2O = L-methionyl-(S)-S-oxide-[protein] + [thioredoxin]-dithiol. It catalyses the reaction [thioredoxin]-disulfide + L-methionine + H2O = L-methionine (S)-S-oxide + [thioredoxin]-dithiol. In terms of biological role, has an important function as a repair enzyme for proteins that have been inactivated by oxidation. Catalyzes the reversible oxidation-reduction of methionine sulfoxide in proteins to methionine. In Listeria monocytogenes serotype 4a (strain HCC23), this protein is Peptide methionine sulfoxide reductase MsrA.